The sequence spans 418 residues: Ig-like V-type domain-containing protein FAM187A (418 aa).

The signal sequence occupies residues 1-18 (MRLAPTTVLLWAWGSLQA). Over 19 to 376 (FEIVEKENIF…ASLSDPETRT (358 aa)) the chain is Extracellular. The region spanning 267 to 361 (PWVPQVPIQF…IAGFRLGVTS (95 aa)) is the Ig-like V-type domain. Cys-289 and Cys-345 are joined by a disulfide. The N-linked (GlcNAc...) asparagine glycan is linked to Asn-317. The chain crosses the membrane as a helical span at residues 377–397 (AVELTLIGYLLIAVVFVTIHL). Topologically, residues 398–418 (CRCCCQSRCCPNFSAQTLLQL) are cytoplasmic.

Belongs to the FAM187 family.

Its subcellular location is the membrane. This Rattus norvegicus (Rat) protein is Ig-like V-type domain-containing protein FAM187A (Fam187a).